We begin with the raw amino-acid sequence, 545 residues long: ATP synthase subunit alpha (545 aa).

An ATP-binding site is contributed by 172 to 179 (GDRKTGKT).

The protein belongs to the ATPase alpha/beta chains family. As to quaternary structure, F-type ATPases have 2 components, CF(1) - the catalytic core - and CF(0) - the membrane proton channel. CF(1) has five subunits: alpha(3), beta(3), gamma(1), delta(1), epsilon(1). CF(0) has three main subunits: a(1), b(2) and c(9-12). The alpha and beta chains form an alternating ring which encloses part of the gamma chain. CF(1) is attached to CF(0) by a central stalk formed by the gamma and epsilon chains, while a peripheral stalk is formed by the delta and b chains.

It is found in the cell membrane. It carries out the reaction ATP + H2O + 4 H(+)(in) = ADP + phosphate + 5 H(+)(out). Produces ATP from ADP in the presence of a proton gradient across the membrane. The alpha chain is a regulatory subunit. This chain is ATP synthase subunit alpha, found in Corynebacterium urealyticum (strain ATCC 43042 / DSM 7109).